The primary structure comprises 100 residues: Small ribosomal subunit protein uS14c (100 aa).

A disordered region spans residues 1–31 (MARKSLIQREKKRQKLEQKYHSIRRSSKKEI).

Belongs to the universal ribosomal protein uS14 family. Part of the 30S ribosomal subunit.

The protein localises to the plastid. It is found in the chloroplast. Functionally, binds 16S rRNA, required for the assembly of 30S particles. This Nicotiana tomentosiformis (Tobacco) protein is Small ribosomal subunit protein uS14c.